Here is a 164-residue protein sequence, read N- to C-terminus: Transcriptional repressor NrdR (164 aa).

A zinc finger lies at 3 to 34 (CPFCRHEDSRVVDSRSLDDGSAIRRRRQCQAC). One can recognise an ATP-cone domain in the interval 46-136 (LTVVKRSGVA…VYRDFESLDD (91 aa)).

It belongs to the NrdR family. The cofactor is Zn(2+).

Functionally, negatively regulates transcription of bacterial ribonucleotide reductase nrd genes and operons by binding to NrdR-boxes. In Micrococcus luteus (strain ATCC 4698 / DSM 20030 / JCM 1464 / CCM 169 / CCUG 5858 / IAM 1056 / NBRC 3333 / NCIMB 9278 / NCTC 2665 / VKM Ac-2230) (Micrococcus lysodeikticus), this protein is Transcriptional repressor NrdR.